A 253-amino-acid chain; its full sequence is Sortase SrtE2 (253 aa).

The span at 1 to 11 (MAATTDTEHQE) shows a compositional bias: basic and acidic residues. Residues 1–23 (MAATTDTEHQEQAGTGGRGRRRP) form a disordered region. The chain crosses the membrane as a helical span at residues 30–50 (AVSVLGELLITAGLVMGLFVV). The disordered stretch occupies residues 69-89 (EKVRDDWAQDRVGGSGQDGPG). Cysteine 220 is an active-site residue.

The protein belongs to the bacterial sortase family. Class E subfamily.

The protein localises to the cell membrane. The enzyme catalyses The enzyme catalyzes a cell wall sorting reaction in which a surface protein with a sorting signal containing a LPXTG motif is cleaved between the Thr and Gly residue. The resulting threonine carboxyl end of the protein is covalently attached to a pentaglycine cross-bridge of peptidoglycan.. Transpeptidase that anchors surface proteins to the cell wall. Recognizes Leu-Ala-x-Thr-Gly and Leu-Pro-x-Thr-Gly, with a preference for the former. Unlike the S.aureus sortase it cleaves not only the Thr-Gly motif but also the Ala-X bond; an Ala-Glu bond is a better substrate than the Thr-Gly motif in vitro. Among its possible substrates are the chaplins ChpA, ChpB and ChpC; this enzyme is more important for ChpC attachment than is SrtE1. A double knockout mutant of srtE1 and srtE2 shows a developmental defect in aerial hyphae formation more dramatic than that due to chaplin deletion. The protein is Sortase SrtE2 of Streptomyces coelicolor (strain ATCC BAA-471 / A3(2) / M145).